Consider the following 89-residue polypeptide: cAMP-regulated phosphoprotein 21 (89 aa).

A disordered region spans residues 1 to 89 (MSEQGDLNQA…GGESLQDQTL (89 aa)). Ser2 bears the N-acetylserine mark. Low complexity predominate over residues 9 to 25 (QAIAEEGGTEQETATPE). Ser33 carries the post-translational modification Phosphoserine. A compositionally biased stretch (basic and acidic residues) spans 40–53 (LELQRRLEAQNQER). Ser56 is subject to Phosphoserine.

In terms of assembly, interacts with CALM1. In terms of processing, phosphorylation at Ser-56 favors interaction with CALM1.

The protein resides in the cytoplasm. Functionally, may act as a competitive inhibitor of calmodulin-dependent enzymes such as calcineurin in neurons. The sequence is that of cAMP-regulated phosphoprotein 21 (ARPP21) from Pongo abelii (Sumatran orangutan).